We begin with the raw amino-acid sequence, 134 residues long: Probable glycine cleavage system H protein (134 aa).

Residues 29–110 (TVLVGITDYA…PYENWIAKLK (82 aa)) form the Lipoyl-binding domain. Lysine 70 is modified (N6-lipoyllysine).

This sequence belongs to the GcvH family. The glycine cleavage system is composed of four proteins: P, T, L and H. (R)-lipoate serves as cofactor.

Its function is as follows. The glycine cleavage system catalyzes the degradation of glycine. The H protein shuttles the methylamine group of glycine from the P protein to the T protein. The polypeptide is Probable glycine cleavage system H protein (Thermococcus gammatolerans (strain DSM 15229 / JCM 11827 / EJ3)).